Reading from the N-terminus, the 341-residue chain is Methionine import ATP-binding protein MetN 3 (341 aa).

In terms of domain architecture, ABC transporter spans 2 to 241 (ILLENVKKIY…PKQDITKRFV (240 aa)). An ATP-binding site is contributed by 38–45 (GYSGAGKS).

Belongs to the ABC transporter superfamily. Methionine importer (TC 3.A.1.24) family. As to quaternary structure, the complex is composed of two ATP-binding proteins (MetN), two transmembrane proteins (MetI) and a solute-binding protein (MetQ).

It localises to the cell membrane. The catalysed reaction is L-methionine(out) + ATP + H2O = L-methionine(in) + ADP + phosphate + H(+). It catalyses the reaction D-methionine(out) + ATP + H2O = D-methionine(in) + ADP + phosphate + H(+). Its function is as follows. Part of the ABC transporter complex MetNIQ involved in methionine import. Responsible for energy coupling to the transport system. This Bacillus cereus (strain ATCC 14579 / DSM 31 / CCUG 7414 / JCM 2152 / NBRC 15305 / NCIMB 9373 / NCTC 2599 / NRRL B-3711) protein is Methionine import ATP-binding protein MetN 3.